We begin with the raw amino-acid sequence, 333 residues long: Ketol-acid reductoisomerase (NAD(P)(+)) (333 aa).

One can recognise a KARI N-terminal Rossmann domain in the interval 2-182 (AKIYYDEDAS…GATRAGVIET (181 aa)). NADP(+) is bound by residues 25–28 (YGSQ), Ser51, and 83–86 (DTVQ). His108 is a catalytic residue. Gly134 contributes to the NADP(+) binding site. Residues 183–327 (TFREETETDL…KELRQMMPWL (145 aa)) enclose the KARI C-terminal knotted domain. Residues Asp191, Glu195, Glu227, and Glu231 each coordinate Mg(2+). Ser252 is a binding site for substrate.

This sequence belongs to the ketol-acid reductoisomerase family. Mg(2+) is required as a cofactor.

It catalyses the reaction (2R)-2,3-dihydroxy-3-methylbutanoate + NAD(+) = (2S)-2-acetolactate + NADH + H(+). It carries out the reaction (2R)-2,3-dihydroxy-3-methylbutanoate + NADP(+) = (2S)-2-acetolactate + NADPH + H(+). It functions in the pathway amino-acid biosynthesis; L-isoleucine biosynthesis; L-isoleucine from 2-oxobutanoate: step 2/4. It participates in amino-acid biosynthesis; L-valine biosynthesis; L-valine from pyruvate: step 2/4. In terms of biological role, involved in the biosynthesis of branched-chain amino acids (BCAA). Catalyzes an alkyl-migration followed by a ketol-acid reduction of (S)-2-acetolactate (S2AL) to yield (R)-2,3-dihydroxy-isovalerate. In the isomerase reaction, S2AL is rearranged via a Mg-dependent methyl migration to produce 3-hydroxy-3-methyl-2-ketobutyrate (HMKB). In the reductase reaction, this 2-ketoacid undergoes a metal-dependent reduction by NADPH or NADH to yield (R)-2,3-dihydroxy-isovalerate. This is Ketol-acid reductoisomerase (NAD(P)(+)) from Hydrogenobaculum sp. (strain Y04AAS1).